We begin with the raw amino-acid sequence, 149 residues long: Calmodulin (149 aa).

The residue at position 2 (alanine 2) is an N-acetylalanine. EF-hand domains follow at residues 8 to 43 (EQIA…LGQN), 44 to 79 (PTEA…KMKD), 81 to 116 (DSEE…LGEK), and 117 to 149 (LTDE…MTSK). Positions 21, 23, 25, 27, 32, 57, 59, 61, 63, 68, 94, 96, 98, and 105 each coordinate Ca(2+). Position 116 is an N6,N6,N6-trimethyllysine (lysine 116). Aspartate 130, aspartate 132, aspartate 134, glutamine 136, and glutamate 141 together coordinate Ca(2+).

This sequence belongs to the calmodulin family.

In terms of biological role, calmodulin mediates the control of a large number of enzymes, ion channels and other proteins by Ca(2+). Among the enzymes to be stimulated by the calmodulin-Ca(2+) complex are a number of protein kinases and phosphatases. In Renilla reniformis (Sea pansy), this protein is Calmodulin.